Here is an 81-residue protein sequence, read N- to C-terminus: Photosystem I iron-sulfur center (81 aa).

2 4Fe-4S ferredoxin-type domains span residues 2 to 31 (SHSVKIYDTCIGCTQCVRACPTDVLEMIPW) and 39 to 68 (IASAPRTEDCVGCKRCESACPTDFLSVRVY). The [4Fe-4S] cluster site is built by Cys11, Cys14, Cys17, Cys21, Cys48, Cys51, Cys54, and Cys58.

As to quaternary structure, the eukaryotic PSI reaction center is composed of at least 11 subunits. [4Fe-4S] cluster is required as a cofactor.

The protein resides in the plastid. It localises to the chloroplast thylakoid membrane. The catalysed reaction is reduced [plastocyanin] + hnu + oxidized [2Fe-2S]-[ferredoxin] = oxidized [plastocyanin] + reduced [2Fe-2S]-[ferredoxin]. Its function is as follows. Apoprotein for the two 4Fe-4S centers FA and FB of photosystem I (PSI); essential for photochemical activity. FB is the terminal electron acceptor of PSI, donating electrons to ferredoxin. The C-terminus interacts with PsaA/B/D and helps assemble the protein into the PSI complex. Required for binding of PsaD and PsaE to PSI. PSI is a plastocyanin-ferredoxin oxidoreductase, converting photonic excitation into a charge separation, which transfers an electron from the donor P700 chlorophyll pair to the spectroscopically characterized acceptors A0, A1, FX, FA and FB in turn. This Phalaenopsis aphrodite subsp. formosana (Moth orchid) protein is Photosystem I iron-sulfur center.